The primary structure comprises 337 residues: GTPase Obg (337 aa).

One can recognise an Obg domain in the interval 4-162; it reads SNFVDYAKIH…RQIVFQLKLL (159 aa). The OBG-type G domain maps to 163-329; sequence ADVGLVGFPN…LKDLLWEKLR (167 aa). Residues 169–176, 194–198, 216–219, 283–286, and 310–312 contribute to the GTP site; these read GFPNTGKS, FTTLE, DIPG, SKSD, and SSF. Residues serine 176 and threonine 196 each coordinate Mg(2+).

It belongs to the TRAFAC class OBG-HflX-like GTPase superfamily. OBG GTPase family. As to quaternary structure, monomer. Mg(2+) is required as a cofactor.

Its subcellular location is the cytoplasm. An essential GTPase which binds GTP, GDP and possibly (p)ppGpp with moderate affinity, with high nucleotide exchange rates and a fairly low GTP hydrolysis rate. Plays a role in control of the cell cycle, stress response, ribosome biogenesis and in those bacteria that undergo differentiation, in morphogenesis control. The polypeptide is GTPase Obg (Azobacteroides pseudotrichonymphae genomovar. CFP2).